The sequence spans 269 residues: MSGIDAKKIRTRHIHEAKANGTKISVLTSYDAMTAAIFDEAGIDMLLVGDSAANVVLGRETTLSITLDEMIVLAKAVTIAAKRALVIVDLPFGTYEVSEQQAVESAVRVMRETGAAAVKIEGGVEMASTIRRIVDAGIPVCGHIGFTPQSEHALGGPVVQGRGSGADKLLADAHAVQAAGAFAVVLEMVPAEIATEVTNQLDIATIGIGAGNGTDGQVLVWQDAFGFNRGRKPRFVREYATLGDQLLEAARAYADEVGSGAFPGEVESY.

Mg(2+) contacts are provided by aspartate 50 and aspartate 89. Residues aspartate 50–serine 51, aspartate 89, and lysine 119 contribute to the 3-methyl-2-oxobutanoate site. Glutamate 121 contributes to the Mg(2+) binding site. Glutamate 187 (proton acceptor) is an active-site residue.

It belongs to the PanB family. In terms of assembly, homodecamer; pentamer of dimers. Requires Mg(2+) as cofactor.

It is found in the cytoplasm. The enzyme catalyses 3-methyl-2-oxobutanoate + (6R)-5,10-methylene-5,6,7,8-tetrahydrofolate + H2O = 2-dehydropantoate + (6S)-5,6,7,8-tetrahydrofolate. It functions in the pathway cofactor biosynthesis; (R)-pantothenate biosynthesis; (R)-pantoate from 3-methyl-2-oxobutanoate: step 1/2. Its function is as follows. Catalyzes the reversible reaction in which hydroxymethyl group from 5,10-methylenetetrahydrofolate is transferred onto alpha-ketoisovalerate to form ketopantoate. This is 3-methyl-2-oxobutanoate hydroxymethyltransferase from Corynebacterium efficiens (strain DSM 44549 / YS-314 / AJ 12310 / JCM 11189 / NBRC 100395).